Here is a 93-residue protein sequence, read N- to C-terminus: Small ribosomal subunit protein uS19 (93 aa).

Belongs to the universal ribosomal protein uS19 family.

In terms of biological role, protein S19 forms a complex with S13 that binds strongly to the 16S ribosomal RNA. This chain is Small ribosomal subunit protein uS19, found in Campylobacter lari (strain RM2100 / D67 / ATCC BAA-1060).